Consider the following 173-residue polypeptide: Large ribosomal subunit protein uL16 (173 aa).

The protein belongs to the universal ribosomal protein uL16 family.

The polypeptide is Large ribosomal subunit protein uL16 (Methanosphaerula palustris (strain ATCC BAA-1556 / DSM 19958 / E1-9c)).